Here is a 394-residue protein sequence, read N- to C-terminus: Elongation factor Tu 2 (394 aa).

The tr-type G domain occupies 10 to 204; it reads KPHVNVGTIG…ALDSYIPQPE (195 aa). A G1 region spans residues 19-26; it reads GHVDHGKT. Residue 19–26 participates in GTP binding; it reads GHVDHGKT. Thr-26 serves as a coordination point for Mg(2+). The tract at residues 60-64 is G2; sequence GITIN. The G3 stretch occupies residues 81–84; it reads DCPG. Residues 81-85 and 136-139 each bind GTP; these read DCPGH and NKCD. Residues 136–139 are G4; the sequence is NKCD. Positions 174-176 are G5; sequence SAL.

Belongs to the TRAFAC class translation factor GTPase superfamily. Classic translation factor GTPase family. EF-Tu/EF-1A subfamily. Monomer.

Its subcellular location is the cytoplasm. It carries out the reaction GTP + H2O = GDP + phosphate + H(+). In terms of biological role, GTP hydrolase that promotes the GTP-dependent binding of aminoacyl-tRNA to the A-site of ribosomes during protein biosynthesis. The chain is Elongation factor Tu 2 from Yersinia pestis bv. Antiqua (strain Antiqua).